We begin with the raw amino-acid sequence, 179 residues long: MYHVIAATTNPAKINAIKLAFEQVFGKDTFDIEDINVDSRVPQQPIGNTETRTGARQRVMAARQVRPEADFWVGVEAGIEDDMTFAWIVIEHEQIRGESRSASLMLPEQILKGVREGRELGDEMAFLTKIDNIKQKGGAIGYFTDGLLSRTSVYQQAIVLALVPVTHDIYKQLNKKDDE.

Residue 8-13 coordinates substrate; that stretch reads TTNPAK. Positions 38 and 68 each coordinate Mg(2+). 68–69 is a substrate binding site; the sequence is EA.

Belongs to the YjjX NTPase family. Homodimer. It depends on Mg(2+) as a cofactor. Mn(2+) is required as a cofactor.

The enzyme catalyses XTP + H2O = XDP + phosphate + H(+). The catalysed reaction is ITP + H2O = IDP + phosphate + H(+). Functionally, phosphatase that hydrolyzes non-canonical purine nucleotides such as XTP and ITP to their respective diphosphate derivatives. Probably excludes non-canonical purines from DNA/RNA precursor pool, thus preventing their incorporation into DNA/RNA and avoiding chromosomal lesions. The chain is Inosine/xanthosine triphosphatase from Proteus mirabilis (strain HI4320).